The chain runs to 350 residues: Neurogenic differentiation factor 1 (350 aa).

Residues 1-91 (MTKSYSEESM…KKKKMTKARM (91 aa)) form a disordered region. Residues 7–18 (EESMMLESQSSS) are compositionally biased toward low complexity. The span at 22 to 38 (DKCHSSSQDERDVDKTS) shows a compositional bias: basic and acidic residues. Over residues 44–72 (DMEDDDDAGLNRLEDEDDEEEEEEEEDGD) the composition is skewed to acidic residues. Over residues 76–91 (PKRRGPKKKKMTKARM) the composition is skewed to basic residues. The Nuclear localization signal motif lies at 82-88 (KKKKMTK). In terms of domain architecture, bHLH spans 96-148 (MRRMKANARERNRMHGLNDALESLRKVVPCYSKTQKLSKIETLRLAKNYIWAL).

Efficient DNA binding requires dimerization with another bHLH protein. In the embryo, expressed broadly in a subset of primary neurons in the brain and spinal cord. At 28 hours post-fertilization (hpf), regions of expression include telencephalon, olfactory placode, epiphysis, cranial ganglia, acoustic ganglia, Rohon-Beard mechano-sensory neurons and motoneurons. In 2 day postembryonic brain, expressed in many brain regions but absent from subpallium, the ventral preoptic region, ventral thalamus and hypothalamus; sites of expression extend laterally from the ventricular proliferative regions and correspond to freshly determined cell populations. In adult, expressed in all tissues examined with highest levels in brain.

The protein resides in the cytoplasm. The protein localises to the nucleus. May act as a transcriptional activator. Differentiation factor required for neurogenesis. Acts as an upstream activator of isl1. The sequence is that of Neurogenic differentiation factor 1 from Danio rerio (Zebrafish).